A 490-amino-acid chain; its full sequence is Actin-related protein 6 (490 aa).

Belongs to the actin family. ARP6 subfamily.

The protein localises to the cytoplasm. Its subcellular location is the cytoskeleton. The polypeptide is Actin-related protein 6 (Dictyostelium discoideum (Social amoeba)).